The chain runs to 78 residues: Large ribosomal subunit protein bL28 (78 aa).

This sequence belongs to the bacterial ribosomal protein bL28 family.

The protein is Large ribosomal subunit protein bL28 of Methylobacillus flagellatus (strain ATCC 51484 / DSM 6875 / VKM B-1610 / KT).